Reading from the N-terminus, the 349-residue chain is D-alanine--D-alanine ligase (349 aa).

The region spanning 132-335 is the ATP-grasp domain; sequence KHVFEAVGVP…YSDLIEKLVD (204 aa). 162–217 provides a ligand contact to ATP; it reads VEKLEFPVFVKPANMGSSVGISKVDDLADLQPALSEAYKYDNRVVIEQGVDAREIE. The Mg(2+) site is built by Asp289, Glu302, and Asn304.

The protein belongs to the D-alanine--D-alanine ligase family. The cofactor is Mg(2+). Mn(2+) serves as cofactor.

It is found in the cytoplasm. It catalyses the reaction 2 D-alanine + ATP = D-alanyl-D-alanine + ADP + phosphate + H(+). The protein operates within cell wall biogenesis; peptidoglycan biosynthesis. Cell wall formation. The chain is D-alanine--D-alanine ligase from Lactococcus lactis subsp. cremoris (strain SK11).